We begin with the raw amino-acid sequence, 225 residues long: Phosphatidylserine decarboxylase proenzyme (225 aa).

Residue Ser189 is the Schiff-base intermediate with substrate; via pyruvic acid of the active site. Pyruvic acid (Ser); by autocatalysis is present on Ser189.

This sequence belongs to the phosphatidylserine decarboxylase family. PSD-A subfamily. Heterodimer of a large membrane-associated beta subunit and a small pyruvoyl-containing alpha subunit. It depends on pyruvate as a cofactor. Is synthesized initially as an inactive proenzyme. Formation of the active enzyme involves a self-maturation process in which the active site pyruvoyl group is generated from an internal serine residue via an autocatalytic post-translational modification. Two non-identical subunits are generated from the proenzyme in this reaction, and the pyruvate is formed at the N-terminus of the alpha chain, which is derived from the carboxyl end of the proenzyme. The post-translation cleavage follows an unusual pathway, termed non-hydrolytic serinolysis, in which the side chain hydroxyl group of the serine supplies its oxygen atom to form the C-terminus of the beta chain, while the remainder of the serine residue undergoes an oxidative deamination to produce ammonia and the pyruvoyl prosthetic group on the alpha chain.

The protein localises to the cell membrane. It carries out the reaction a 1,2-diacyl-sn-glycero-3-phospho-L-serine + H(+) = a 1,2-diacyl-sn-glycero-3-phosphoethanolamine + CO2. Its pathway is phospholipid metabolism; phosphatidylethanolamine biosynthesis; phosphatidylethanolamine from CDP-diacylglycerol: step 2/2. Its function is as follows. Catalyzes the formation of phosphatidylethanolamine (PtdEtn) from phosphatidylserine (PtdSer). This chain is Phosphatidylserine decarboxylase proenzyme, found in Amoebophilus asiaticus (strain 5a2).